The chain runs to 331 residues: Phenylalanine--tRNA ligase alpha subunit (331 aa).

E258 serves as a coordination point for Mg(2+).

This sequence belongs to the class-II aminoacyl-tRNA synthetase family. Phe-tRNA synthetase alpha subunit type 1 subfamily. In terms of assembly, tetramer of two alpha and two beta subunits. The cofactor is Mg(2+).

The protein localises to the cytoplasm. It carries out the reaction tRNA(Phe) + L-phenylalanine + ATP = L-phenylalanyl-tRNA(Phe) + AMP + diphosphate + H(+). In Synechocystis sp. (strain ATCC 27184 / PCC 6803 / Kazusa), this protein is Phenylalanine--tRNA ligase alpha subunit (pheS).